The chain runs to 382 residues: Transforming growth factor beta-1 proprotein (382 aa).

The first 20 residues, 1–20, serve as a signal peptide directing secretion; sequence MRAVCLMLTALLMLEYVCRS. The interval 23–68 is straightjacket domain; that stretch reads MSTCKSLDLELVKRKRIEAIRGQILSKLRLPKEPEIDQEGDTEEVP. The interval 69–264 is arm domain; sequence ASLMSIYNST…SLPVERHSQL (196 aa). Residues Asn-76, Asn-116, and Asn-125 are each glycosylated (N-linked (GlcNAc...) asparagine). Residues 218–243 form a bowtie tail region; the sequence is GKPMEEFRFKISGMNKLRGNTETLAM. The Cell attachment site motif lies at 235–237; the sequence is RGN. Disulfide bonds link Cys-278–Cys-286, Cys-285–Cys-348, Cys-314–Cys-379, and Cys-318–Cys-381.

Belongs to the TGF-beta family. In terms of assembly, latency-associated peptide: Homodimer; disulfide-linked. Latency-associated peptide: Interacts with Transforming growth factor beta-1 (TGF-beta-1) chain; interaction is non-covalent and maintains (TGF-beta-1) in a latent state; each Latency-associated peptide (LAP) monomer interacts with TGF-beta-1 in the other monomer. Transforming growth factor beta-1: Homodimer; disulfide-linked. Transforming growth factor beta-1: Interacts with TGF-beta receptors (tgfbr1 and tgfbr2), leading to signal transduction. Interacts with EFEMP2. In terms of processing, transforming growth factor beta-1 proprotein: The precursor proprotein is cleaved in the Golgi apparatus to form Transforming growth factor beta-1 (TGF-beta-1) and Latency-associated peptide (LAP) chains, which remain non-covalently linked, rendering TGF-beta-1 inactive. In terms of tissue distribution, expressed in blood leukocytes, kidney macrophages, brain, gill and spleen but not in liver.

It is found in the secreted. It localises to the extracellular space. Its subcellular location is the extracellular matrix. Functionally, transforming growth factor beta-1 proprotein: Precursor of the Latency-associated peptide (LAP) and Transforming growth factor beta-1 (TGF-beta-1) chains, which constitute the regulatory and active subunit of TGF-beta-1, respectively. Required to maintain the Transforming growth factor beta-1 (TGF-beta-1) chain in a latent state during storage in extracellular matrix. Associates non-covalently with TGF-beta-1 and regulates its activation via interaction with 'milieu molecules', such as LTBP1, LRRC32/GARP and LRRC33/NRROS, that control activation of TGF-beta-1. Interaction with integrins (ITGAV:ITGB6 or ITGAV:ITGB8) results in distortion of the Latency-associated peptide chain and subsequent release of the active TGF-beta-1. Its function is as follows. Transforming growth factor beta-1: Multifunctional protein that regulates the growth and differentiation of various cell types and is involved in various processes, such as normal development, immune function, microglia function and responses to neurodegeneration. Activation into mature form follows different steps: following cleavage of the proprotein in the Golgi apparatus, Latency-associated peptide (LAP) and Transforming growth factor beta-1 (TGF-beta-1) chains remain non-covalently linked rendering TGF-beta-1 inactive during storage in extracellular matrix. At the same time, LAP chain interacts with 'milieu molecules', such as ltbp1, lrrc32/garp and lrrc33/nrros that control activation of TGF-beta-1 and maintain it in a latent state during storage in extracellular milieus. TGF-beta-1 is released from LAP by integrins (ITGAV:ITGB6 or ITGAV:ITGB8): integrin-binding to LAP stabilizes an alternative conformation of the LAP bowtie tail and results in distortion of the LAP chain and subsequent release of the active TGF-beta-1. Once activated following release of LAP, TGF-beta-1 acts by binding to TGF-beta receptors (tgfbr1 and tgfbr2), which transduce signal. While expressed by many cells types, TGF-beta-1 only has a very localized range of action within cell environment thanks to fine regulation of its activation by Latency-associated peptide chain (LAP) and 'milieu molecules'. Plays an important role in bone remodeling: acts as a potent stimulator of osteoblastic bone formation. Can promote either T-helper 17 cells (Th17) or regulatory T-cells (Treg) lineage differentiation in a concentration-dependent manner. Can induce epithelial-to-mesenchymal transition (EMT) and cell migration in various cell types. This chain is Transforming growth factor beta-1 proprotein (tgfb1), found in Oncorhynchus mykiss (Rainbow trout).